A 178-amino-acid chain; its full sequence is Caveolin-1 (178 aa).

Ser-2 carries the N-acetylserine modification. Ser-2 is modified (phosphoserine). The segment at Ser-2–Val-94 is required for homooligomerization. At Ser-2–Ser-104 the chain is on the cytoplasmic side. Lys-5 is subject to N6-acetyllysine; alternate. Residue Lys-5 forms a Glycyl lysine isopeptide (Lys-Gly) (interchain with G-Cter in ubiquitin); alternate linkage. Tyr-6 is subject to Phosphotyrosine. The residue at position 9 (Ser-9) is a Phosphoserine. Residue Tyr-14 is modified to Phosphotyrosine; by ABL1. Tyr-25 is subject to Phosphotyrosine. Glycyl lysine isopeptide (Lys-Gly) (interchain with G-Cter in ubiquitin) cross-links involve residues Lys-26, Lys-30, Lys-39, Lys-47, and Lys-57. The segment at Asp-82 to Val-94 is interaction with CAVIN3. Positions Thr-105–Leu-125 form an intramembrane region, helical. The Cytoplasmic portion of the chain corresponds to His-126–Ile-178. The interacts with SPRY1, SPRY2, SPRY3 and SPRY4 stretch occupies residues Val-131–Gln-142. Residues Cys-133, Cys-143, and Cys-156 are each lipidated (S-palmitoyl cysteine). The tract at residues Ser-149–Phe-160 is interacts with SPRY1, SPRY2, and SPRY4. An interacts with SPRY1, SPRY2, SPRY3 and SPRY4 region spans residues Phe-167–Ile-178.

It belongs to the caveolin family. Homooligomer. Interacts with GLIPR2. Interacts with NOSTRIN. Interacts with SNAP25 and STX1A. Interacts (via the N-terminus) with DPP4; the interaction is direct. Interacts with CTNNB1, CDH1 and JUP. Interacts with PACSIN2; this interaction induces membrane tubulation. Interacts with SLC7A9. Interacts with BMX and BTK. Interacts with TGFBR1. Interacts with CAVIN3 (via leucine-zipper domain) in a cholesterol-sensitive manner. Interacts with CAVIN1. Interacts with EHD2 in a cholesterol-dependent manner. Forms a ternary complex with UBXN6 and VCP; mediates CAV1 targeting to lysosomes for degradation. Interacts with ABCG1; this interaction regulates ABCG1-mediated cholesterol efflux. Interacts with NEU3; this interaction enhances NEU3 sialidase activity within caveola. Interacts (via C-terminus) with SPRY1, SPRY2 (via C-terminus), SPRY3, and SPRY4. Interacts with IGFBP5; this interaction allows trafficking of IGFBP5 from the plasma membrane to the nucleus. In terms of processing, phosphorylated at Tyr-14 by ABL1 in response to oxidative stress. Ubiquitinated. Undergo monoubiquitination and multi- and/or polyubiquitination. Monoubiquitination of N-terminal lysines promotes integration in a ternary complex with UBXN6 and VCP which promotes oligomeric CAV1 targeting to lysosomes for degradation. Ubiquitinated by ZNRF1; leading to degradation and modulation of the TLR4-mediated immune response.

Its subcellular location is the golgi apparatus membrane. The protein localises to the cell membrane. It is found in the membrane. It localises to the caveola. The protein resides in the membrane raft. May act as a scaffolding protein within caveolar membranes. Forms a stable heterooligomeric complex with CAV2 that targets to lipid rafts and drives caveolae formation. Mediates the recruitment of CAVIN proteins (CAVIN1/2/3/4) to the caveolae. Interacts directly with G-protein alpha subunits and can functionally regulate their activity. Involved in the costimulatory signal essential for T-cell receptor (TCR)-mediated T-cell activation. Its binding to DPP4 induces T-cell proliferation and NF-kappa-B activation in a T-cell receptor/CD3-dependent manner. Recruits CTNNB1 to caveolar membranes and may regulate CTNNB1-mediated signaling through the Wnt pathway. Negatively regulates TGFB1-mediated activation of SMAD2/3 by mediating the internalization of TGFBR1 from membrane rafts leading to its subsequent degradation. Binds 20(S)-hydroxycholesterol (20(S)-OHC). The sequence is that of Caveolin-1 (CAV1) from Oryctolagus cuniculus (Rabbit).